The chain runs to 372 residues: MKYDLIIIGSGSVGAAAGYYATRAGLKVLMTDAHMPPYQQGSHHGDTRLIRHAYGEGEKYVPLVLRAQTLWDELSTHNEEPIFVRSGVVNLGPADSAFLANVARSAQQWQLNVERLDATALMTRWPEIRVPDNYIGLFEADSGFLRSELAITTWLRLAREAGCAQLFNSPVSHIHHDDNGVTIETSEGCYHASKALISAGTWVKTLVPELPVQPVRKVFAWFKADGRYSTKNRFPAFTGEMPNGDHYYGFPAENDELKIGKHNGGQRIQAPEERKPFAAVASDGAEAFPFLRNVLPGIGGCLHGAACTYDNSPDEDFIIDTLPGHENTLVITGLSGHGFKFAPVLGEIAADFALGKTPSFDLTPFRLSRFSQ.

4–34 (DLIIIGSGSVGAAAGYYATRAGLKVLMTDAH) contacts FAD. Cys307 is modified (S-8alpha-FAD cysteine).

It belongs to the MSOX/MTOX family. MTOX subfamily. Monomer. FAD serves as cofactor.

It carries out the reaction N(alpha)-methyl-L-tryptophan + O2 + H2O = L-tryptophan + formaldehyde + H2O2. Its function is as follows. Catalyzes the oxidative demethylation of N-methyl-L-tryptophan. This chain is N-methyl-L-tryptophan oxidase, found in Salmonella typhi.